The chain runs to 300 residues: uncharacterized protein (300 aa).

10 helical membrane-spanning segments follow: residues 4–24 (IIII…WIAM), 31–51 (IPPF…LIIL), 68–88 (FQIF…LYGG), 95–115 (ISSI…HFYL), 120–140 (NFIQ…VLLI), 146–166 (CFFQ…HAVI), 177–197 (VSVI…LSII), 214–234 (ILAV…SYFY), 242–262 (FYAS…EIYI), and 272–292 (LWFI…INFF). EamA domains follow at residues 15–139 (ITWG…FVLL) and 161–287 (LSHA…LTLI).

Belongs to the EamA transporter family.

It localises to the cell membrane. This is an uncharacterized protein from Buchnera aphidicola subsp. Schizaphis graminum (strain Sg).